The sequence spans 92 residues: Small ribosomal subunit protein uS19 (92 aa).

Belongs to the universal ribosomal protein uS19 family.

In terms of biological role, protein S19 forms a complex with S13 that binds strongly to the 16S ribosomal RNA. This is Small ribosomal subunit protein uS19 from Staphylococcus carnosus (strain TM300).